A 491-amino-acid chain; its full sequence is Chromosomal replication initiator protein DnaA (491 aa).

The tract at residues 1-69 is domain I, interacts with DnaA modulators; it reads MTTWDKCLKK…TIQECHGNDL (69 aa). Positions 69–154 are domain II; the sequence is LIIEYSNKKF…KEDEEYSFGL (86 aa). The domain III, AAA+ region stretch occupies residues 155 to 371; it reads PLKEKYVFDS…GALNRVLTTS (217 aa). Residues Gly-199, Gly-201, Lys-202, and Thr-203 each coordinate ATP. The interval 372 to 491 is domain IV, binds dsDNA; the sequence is KFNHKDPTIE…YELLLDKISR (120 aa).

This sequence belongs to the DnaA family. As to quaternary structure, oligomerizes as a right-handed, spiral filament on DNA at oriC.

Its subcellular location is the cytoplasm. Its function is as follows. Plays an essential role in the initiation and regulation of chromosomal replication. ATP-DnaA binds to the origin of replication (oriC) to initiate formation of the DNA replication initiation complex once per cell cycle. Binds the DnaA box (a 9 base pair repeat at the origin) and separates the double-stranded (ds)DNA. Forms a right-handed helical filament on oriC DNA; dsDNA binds to the exterior of the filament while single-stranded (ss)DNA is stabiized in the filament's interior. The ATP-DnaA-oriC complex binds and stabilizes one strand of the AT-rich DNA unwinding element (DUE), permitting loading of DNA polymerase. After initiation quickly degrades to an ADP-DnaA complex that is not apt for DNA replication. Binds acidic phospholipids. The protein is Chromosomal replication initiator protein DnaA of Francisella tularensis subsp. novicida (strain U112).